Consider the following 93-residue polypeptide: MKEQTPIRKAVALHYDEQKDKAPRVIATGKGHVADNIIKEAKKAGVPIQEDRTLVELMRHLTVDDQIPEALYETVAEIFSFIYKLDESVKNKK.

This is an uncharacterized protein from Bacillus subtilis (strain 168).